Consider the following 278-residue polypeptide: MGIRIYKAYTPGTRNRSVSDYKNISCLKPEKSLTSGKMSKKGRNNQGIITSRHRGGGHKRLYRKIDFRRKKIGIYGIVKTIEYDPNRNSHICLVNYEDGEKRYILYPRGIKIGDTILSSMDASIFVGNTLPLTQIPLGTAIHNIELQPGKGGQLVRAAGTVAQVVAKEGKWTSIRLPSGEVRLIYQKCLATIGQVGNPEFNNQSIGKAGSKRWQGKRPKVRGTAMNPVDHPHGGGEGRTSIGRKRPLTPWGYPTIGKKTRSKNKYSNIFVIRKRKLNS.

Disordered regions lie at residues 32-56 (SLTSGKMSKKGRNNQGIITSRHRGG) and 203-256 (QSIG…PTIG). Residues 209 to 220 (GSKRWQGKRPKV) are compositionally biased toward basic residues.

The protein belongs to the universal ribosomal protein uL2 family. In terms of assembly, part of the 50S ribosomal subunit.

It is found in the plastid. Its subcellular location is the chloroplast. The chain is Large ribosomal subunit protein uL2c (rpl2) from Chara vulgaris (Common stonewort).